We begin with the raw amino-acid sequence, 446 residues long: Calcium-binding and coiled-coil domain-containing protein 2 (446 aa).

A CLIR motif is present at residues 133-136 (ILVV). A coiled-coil region spans residues 137–349 (TTQGEVEEIE…RENSRLLSYM (213 aa)). Positions 203-206 (DYWE) match the LIR-like motif. A disordered region spans residues 362–390 (TSDEGGARQNPGLAYGNPYSGIQESSSPS). Residues 371-381 (NPGLAYGNPYS) form an interaction with LGALS8 region. Over residues 381–390 (SGIQESSSPS) the composition is skewed to polar residues. Residues 395 to 446 (KKCPICKADDICDHTLEQQQMQPLCFNCPICDKIFPATEKQIFEDHVFCHSL) form an interaction with MYO6 region. A UBZ1-type zinc finger spans residues 419–444 (CFNCPICDKIFPATEKQIFEDHVFCH). Zn(2+) contacts are provided by C422, C425, H440, and H444. A Phosphoserine modification is found at S445.

Belongs to the CALCOCO family. In terms of assembly, dimer. Part of a complex consisting of CALCOCO2, TAX1BP1 and MYO6. Interacts with MYO6. Interacts with GEMIN4. Interacts with ATG8 family members MAP1LC3A, MAP1LC3B, GABARAP, GABARAPL1 and GABARAPL2. Interacts with ATG8 family member MAP1LC3C. Interacts with LGALS8. Interacts with TOM1; the interaction is indirect and is mediated by MYO6, which acts as a bridge between TOM1 and CALCOCO2. Interacts with AZI2. (Microbial infection) Interacts with Lassa virus protein Z. As to quaternary structure, (Microbial infection) Interacts with Mopeia virus protein Z. Post-translationally, (Microbial infection) Cleaved by S.pyogenes SpeB protease; leading to its degradation. Degradation by SpeB prevents autophagy, promoting to S.pyogenes intracellular replication. As to expression, expressed in all tissues tested with highest expression in skeletal muscle and lowest in brain.

It localises to the cytoplasm. It is found in the perinuclear region. The protein resides in the cytoskeleton. Its subcellular location is the cytoplasmic vesicle. The protein localises to the autophagosome membrane. Xenophagy-specific receptor required for autophagy-mediated intracellular bacteria degradation. Acts as an effector protein of galectin-sensed membrane damage that restricts the proliferation of infecting pathogens such as Salmonella typhimurium upon entry into the cytosol by targeting LGALS8-associated bacteria for autophagy. Initially orchestrates bacteria targeting to autophagosomes and subsequently ensures pathogen degradation by regulating pathogen-containing autophagosome maturation. Bacteria targeting to autophagosomes relies on its interaction with MAP1LC3A, MAP1LC3B and/or GABARAPL2, whereas regulation of pathogen-containing autophagosome maturation requires the interaction with MAP3LC3C. May play a role in ruffle formation and actin cytoskeleton organization and seems to negatively regulate constitutive secretion. The chain is Calcium-binding and coiled-coil domain-containing protein 2 (CALCOCO2) from Homo sapiens (Human).